The chain runs to 156 residues: MSRRGNIKRKPVPPDPIYNSCLLNMTIRRVMKSGKKSVAAGIVYDAMTMIKERTGEEPLEVFERAMKNLTPLVEVKARRVGGATYQVPMEVRPARGTTLALRWLIRYSRIRGGRSMASKLANEIMDAANETGAAMKKRDETHRMADANKAFAHYRY.

Belongs to the universal ribosomal protein uS7 family. As to quaternary structure, part of the 30S ribosomal subunit. Contacts proteins S9 and S11.

Its function is as follows. One of the primary rRNA binding proteins, it binds directly to 16S rRNA where it nucleates assembly of the head domain of the 30S subunit. Is located at the subunit interface close to the decoding center, probably blocks exit of the E-site tRNA. This Crocosphaera subtropica (strain ATCC 51142 / BH68) (Cyanothece sp. (strain ATCC 51142)) protein is Small ribosomal subunit protein uS7.